A 264-amino-acid chain; its full sequence is Apolipoprotein A-I (264 aa).

The N-terminal stretch at 1–18 is a signal peptide; sequence MKAVVLAVALVFLTGSQA. 2 consecutive repeat copies span residues 67-88 and 89-110. Residues 67–264 form a 10 X approximate tandem repeats region; the sequence is LNLLENWDTL…DKASETLTAQ (198 aa). A Methionine sulfoxide modification is found at Met-109. A 3; half-length repeat occupies 111–121; the sequence is KDLEEVKQKVQ. Repeat copies occupy residues 122 to 143, 144 to 165, and 166 to 187. One copy of the 7; truncated repeat lies at 188–207; that stretch reads PHSEQMRESLAQRLAELKSN. Met-193 is subject to Methionine sulfoxide. Copy 8 of the repeat occupies 208–229; sequence PTLNEYHTRAKTHLKTLGEKAR. One copy of the 9; half-length repeat lies at 230-240; it reads PALEDLRHSLM. Residues Met-240 and Met-242 each carry the methionine sulfoxide modification. The stretch at 241–264 is repeat 10; that stretch reads PMLETLKTQVQSVIDKASETLTAQ.

It belongs to the apolipoprotein A1/A4/E family. As to quaternary structure, homodimer. Interacts with APOA1BP and CLU. Component of a sperm activating protein complex (SPAP), consisting of APOA1, an immunoglobulin heavy chain, an immunoglobulin light chain and albumin. Interacts with NDRG1. Interacts with SCGB3A2. Interacts with NAXE and YJEFN3. Post-translationally, glycosylated. Palmitoylated. In terms of processing, may be acylated. Post-translationally, phosphorylation sites are present in the extracellular medium. Major protein of plasma HDL, also found in chylomicrons.

The protein localises to the secreted. Its function is as follows. Participates in the reverse transport of cholesterol from tissues to the liver for excretion by promoting cholesterol efflux from tissues and by acting as a cofactor for the lecithin cholesterol acyltransferase (LCAT). As part of the SPAP complex, activates spermatozoa motility. This chain is Apolipoprotein A-I (Apoa1), found in Mus musculus (Mouse).